The primary structure comprises 99 residues: Large ribosomal subunit protein eL36 (99 aa).

Belongs to the eukaryotic ribosomal protein eL36 family. In terms of assembly, component of the large ribosomal subunit. Mature ribosomes consist of a small (40S) and a large (60S) subunit. The 40S subunit contains about 32 different proteins and 1 molecule of RNA (18S). The 60S subunit contains 45 different proteins and 3 molecules of RNA (25S, 5.8S and 5S).

The protein localises to the cytoplasm. Component of the ribosome, a large ribonucleoprotein complex responsible for the synthesis of proteins in the cell. The small ribosomal subunit (SSU) binds messenger RNAs (mRNAs) and translates the encoded message by selecting cognate aminoacyl-transfer RNA (tRNA) molecules. The large subunit (LSU) contains the ribosomal catalytic site termed the peptidyl transferase center (PTC), which catalyzes the formation of peptide bonds, thereby polymerizing the amino acids delivered by tRNAs into a polypeptide chain. The nascent polypeptides leave the ribosome through a tunnel in the LSU and interact with protein factors that function in enzymatic processing, targeting, and the membrane insertion of nascent chains at the exit of the ribosomal tunnel. The sequence is that of Large ribosomal subunit protein eL36 from Candida albicans (strain SC5314 / ATCC MYA-2876) (Yeast).